The following is a 267-amino-acid chain: 3-oxoadipate enol-lactonase 2 (267 aa).

The catalysed reaction is (4,5-dihydro-5-oxofuran-2-yl)-acetate + H2O = 3-oxoadipate + H(+). It functions in the pathway aromatic compound metabolism; beta-ketoadipate pathway; 3-oxoadipate from 5-oxo-4,5-dihydro-2-furylacetate: step 1/1. This is 3-oxoadipate enol-lactonase 2 (catD) from Acinetobacter baylyi (strain ATCC 33305 / BD413 / ADP1).